Here is a 475-residue protein sequence, read N- to C-terminus: MASKPSIPKGTRDFSPAEVSKRQYIIQTIKANFEKFGFQPIETPSFENSDTLMGKYGEEGDRLIFKILNSGNFFYNKSKIELPESIEELQLNSAEKITLEQRIELNKFTGKISEKALRYDLTVPFARYVVQHQSEIEFPFKRYQIQPVWRADNPQKGRFREFFQCDADVVGSKSLWQEVELVQLYDTVFTSLGLEGVTIKINNRKILSGIAEVIGASDKLIDFTVALDKLDKIGEDGVKKEMIEKGISEDALVKVQPLFNFSGTFADKIAQLSDLLSSSEEGMKGVEELKFICDNVADLGLSTAVLDLDVTLARGLNYYTGAIFEVAAPKTVAMGSIGGGGRYDDLTGIFGLKNMSGVGISFGLDRIYLVLEELQLFPETVAATSKAIFLNFGDKEALYASKAIQKLRQENIKVELYPDNVKVGKQFQYADKRLIPFAVLVGDQEINSNSYALKNLVTGEQVSVDFEGLKKTLLG.

The protein belongs to the class-II aminoacyl-tRNA synthetase family. Homodimer.

The protein localises to the cytoplasm. It carries out the reaction tRNA(His) + L-histidine + ATP = L-histidyl-tRNA(His) + AMP + diphosphate + H(+). This is Histidine--tRNA ligase from Flavobacterium johnsoniae (strain ATCC 17061 / DSM 2064 / JCM 8514 / BCRC 14874 / CCUG 350202 / NBRC 14942 / NCIMB 11054 / UW101) (Cytophaga johnsonae).